The sequence spans 254 residues: Triosephosphate isomerase (254 aa).

12–14 provides a ligand contact to substrate; it reads NWK. His-99 (electrophile) is an active-site residue. Glu-169 (proton acceptor) is an active-site residue. Substrate is bound by residues Gly-175, Ser-214, and 235–236; that span reads GG.

It belongs to the triosephosphate isomerase family. In terms of assembly, homodimer.

It localises to the cytoplasm. The enzyme catalyses D-glyceraldehyde 3-phosphate = dihydroxyacetone phosphate. It functions in the pathway carbohydrate biosynthesis; gluconeogenesis. Its pathway is carbohydrate degradation; glycolysis; D-glyceraldehyde 3-phosphate from glycerone phosphate: step 1/1. In terms of biological role, involved in the gluconeogenesis. Catalyzes stereospecifically the conversion of dihydroxyacetone phosphate (DHAP) to D-glyceraldehyde-3-phosphate (G3P). In Brucella melitensis biotype 1 (strain ATCC 23456 / CCUG 17765 / NCTC 10094 / 16M), this protein is Triosephosphate isomerase.